The chain runs to 482 residues: Transcription initiation factor IIE subunit alpha (482 aa).

The region spanning 9 to 99 (VKNLLKFVVR…KYPHAIDAIK (91 aa)) is the HTH TFE/IIEalpha-type domain. The segment at 124 to 152 (CPICLTKYTQLEAVQLLNFDRTEFLCSLC) adopts a C4-type zinc-finger fold. Residues 274–286 (RELQERQAEEKRK) show a composition bias toward basic and acidic residues. Disordered stretches follow at residues 274–295 (RELQ…EWHK) and 321–482 (AMDS…FEDV). Residues 321 to 345 (AMDSINPDNEPAQETSYQNNRTLTE) show a composition bias toward polar residues. Residues 374 to 401 (EEEEEEEEEEDEEEEEEEEMEDVMDDND) are compositionally biased toward acidic residues. A compositionally biased stretch (polar residues) spans 419-432 (TAGTAKTESNTSND). Over residues 433 to 444 (VKQESINDKTED) the composition is skewed to basic and acidic residues. Positions 464-482 (GDDDDDDDDDEMDIEFEDV) are enriched in acidic residues.

Belongs to the TFIIE alpha subunit family. TFIIE is a tetramer of two alpha (TFA1) and two beta (TFA2) subunits.

Its subcellular location is the nucleus. Its function is as follows. Recruits TFIIH to the initiation complex and stimulates the RNA polymerase II C-terminal domain kinase and DNA-dependent ATPase activities of TFIIH. Both TFIIH and TFIIE are required for promoter clearance by RNA polymerase. The chain is Transcription initiation factor IIE subunit alpha (TFA1) from Saccharomyces cerevisiae (strain ATCC 204508 / S288c) (Baker's yeast).